Here is a 296-residue protein sequence, read N- to C-terminus: Cytidine deaminase (296 aa).

CMP/dCMP-type deaminase domains lie at 47–167 and 186–296; these read TESE…FGPK and DSSD…VDPI. 88-90 contributes to the substrate binding site; the sequence is NLE. A Zn(2+)-binding site is contributed by His-101. The active-site Proton donor is Glu-103. Zn(2+) is bound by residues Cys-128 and Cys-131.

The protein belongs to the cytidine and deoxycytidylate deaminase family. As to quaternary structure, homodimer. Requires Zn(2+) as cofactor.

It catalyses the reaction cytidine + H2O + H(+) = uridine + NH4(+). It carries out the reaction 2'-deoxycytidine + H2O + H(+) = 2'-deoxyuridine + NH4(+). In terms of biological role, this enzyme scavenges exogenous and endogenous cytidine and 2'-deoxycytidine for UMP synthesis. This chain is Cytidine deaminase, found in Shewanella oneidensis (strain ATCC 700550 / JCM 31522 / CIP 106686 / LMG 19005 / NCIMB 14063 / MR-1).